Reading from the N-terminus, the 85-residue chain is uncharacterized protein (85 aa).

It belongs to the BolA/IbaG family.

This is an uncharacterized protein from Haemophilus influenzae (strain ATCC 51907 / DSM 11121 / KW20 / Rd).